Consider the following 23-residue polypeptide: SVIELGKMILQETGKNPVTHYGA.

Post-translationally, contains 7 disulfide bonds. In terms of tissue distribution, expressed by the venom gland.

Its subcellular location is the secreted. Snake venom phospholipase A2 homolog that lacks catalytic activity. Shows myotoxic activities. Induces local edema a few hours after injection (5-10 ug) in the hind paw. In Trimeresurus stejnegeri (Chinese green tree viper), this protein is Basic phospholipase A2 homolog CTs-K49c.